We begin with the raw amino-acid sequence, 542 residues long: Sterile alpha motif domain-containing protein 11 (542 aa).

The disordered stretch occupies residues Leu-268–Leu-364. Positions Pro-273–Pro-285 are enriched in pro residues. Thr-342 carries the phosphothreonine modification. Residues Trp-404–Val-469 enclose the SAM domain. Residues Leu-486–Gln-542 are disordered. The residue at position 499 (Ser-499) is a Phosphoserine. Polar residues predominate over residues Ser-499–Gly-526.

As to quaternary structure, self-associates. Component of a Polycomb group (PcG) multiprotein PRC1-like complex. Interacts with SAMD7 and PHC2. In terms of tissue distribution, expressed in the outer nuclear layer of rod photoreceptors in the retina (at protein level). Predominantly expressed in retinal photoreceptors and pineal gland.

It localises to the nucleus. Component of a Polycomb group (PcG) multiprotein PRC1-like complex, essential for establishing rod photoreceptor cell identity and function by silencing nonrod gene expression in developing rod photoreceptor cells. The chain is Sterile alpha motif domain-containing protein 11 (Samd11) from Mus musculus (Mouse).